Reading from the N-terminus, the 161-residue chain is Ribonuclease P protein component (161 aa).

A disordered region spans residues 1–20; sequence MPDELRAEKSFPSKPYDSLK.

Belongs to the RnpA family. As to quaternary structure, consists of a catalytic RNA component (M1 or rnpB) and a protein subunit.

It catalyses the reaction Endonucleolytic cleavage of RNA, removing 5'-extranucleotides from tRNA precursor.. In terms of biological role, RNaseP catalyzes the removal of the 5'-leader sequence from pre-tRNA to produce the mature 5'-terminus. It can also cleave other RNA substrates such as 4.5S RNA. The protein component plays an auxiliary but essential role in vivo by binding to the 5'-leader sequence and broadening the substrate specificity of the ribozyme. The chain is Ribonuclease P protein component from Helicobacter pylori (strain P12).